Reading from the N-terminus, the 666-residue chain is Probable potassium transport system protein Kup (666 aa).

12 consecutive transmembrane segments (helical) span residues 16–36 (GFII…LYTM), 58–78 (ISLI…LIAL), 100–120 (PWLI…GALT), 149–169 (IITT…GTGF), 173–193 (IFGP…FFNM), 221–241 (IFIL…YSDL), 253–273 (WPFV…WILA), 294–314 (VYLV…LISG), 343–363 (LYIP…VLAF), 373–393 (YGLA…YYLI), 399–419 (PILA…FFLA), and 424–444 (FMHG…VMFI).

Belongs to the HAK/KUP transporter (TC 2.A.72) family.

It is found in the cell membrane. It catalyses the reaction K(+)(in) + H(+)(in) = K(+)(out) + H(+)(out). Transport of potassium into the cell. Likely operates as a K(+):H(+) symporter. The polypeptide is Probable potassium transport system protein Kup (Streptococcus pyogenes serotype M3 (strain ATCC BAA-595 / MGAS315)).